The chain runs to 302 residues: Elongation factor Ts (302 aa).

The interval T80–V83 is involved in Mg(2+) ion dislocation from EF-Tu.

It belongs to the EF-Ts family.

The protein localises to the cytoplasm. Associates with the EF-Tu.GDP complex and induces the exchange of GDP to GTP. It remains bound to the aminoacyl-tRNA.EF-Tu.GTP complex up to the GTP hydrolysis stage on the ribosome. The polypeptide is Elongation factor Ts (Gluconobacter oxydans (strain 621H) (Gluconobacter suboxydans)).